Here is a 247-residue protein sequence, read N- to C-terminus: 2,3-bisphosphoglycerate-dependent phosphoglycerate mutase (247 aa).

Residues 8 to 15 (RHGESTWN), 21 to 22 (TG), arginine 60, 87 to 90 (ERHY), lysine 98, 114 to 115 (RR), and 183 to 184 (GN) contribute to the substrate site. The active-site Tele-phosphohistidine intermediate is histidine 9. Catalysis depends on glutamate 87, which acts as the Proton donor/acceptor.

It belongs to the phosphoglycerate mutase family. BPG-dependent PGAM subfamily. In terms of assembly, homodimer.

The catalysed reaction is (2R)-2-phosphoglycerate = (2R)-3-phosphoglycerate. Its pathway is carbohydrate degradation; glycolysis; pyruvate from D-glyceraldehyde 3-phosphate: step 3/5. Its function is as follows. Catalyzes the interconversion of 2-phosphoglycerate and 3-phosphoglycerate. The polypeptide is 2,3-bisphosphoglycerate-dependent phosphoglycerate mutase (Acidovorax sp. (strain JS42)).